The sequence spans 646 residues: Type I inositol polyphosphate 5-phosphatase 2 (646 aa).

The segment covering 59 to 74 (TDEDSHNGRRGSEADH) has biased composition (basic and acidic residues). Disordered regions lie at residues 59 to 99 (TDED…GKSE), 185 to 207 (ESVYDQSPSCNNNALHRSHSAPS), and 329 to 369 (IDNR…IRNS). Over residues 188–207 (YDQSPSCNNNALHRSHSAPS) the composition is skewed to polar residues. The segment covering 341 to 350 (EAAKIMHDDS) has biased composition (basic and acidic residues). 2 catalytic regions span residues 495-510 (DQVFWFGDLNYRLNMS) and 575-590 (KKRAPAWCDRILWLGK).

It belongs to the inositol polyphosphate 5-phosphatase family. Expressed ubiquitously.

It catalyses the reaction 1D-myo-inositol 1,4,5-trisphosphate + H2O = 1D-myo-inositol 1,4-bisphosphate + phosphate. It carries out the reaction 1D-myo-inositol 1,3,4,5-tetrakisphosphate + H2O = 1D-myo-inositol 1,3,4-trisphosphate + phosphate. In terms of biological role, has phosphatase activity toward Ins(1,4,5)P3 and Ins(1,3,4,5)P4. Seems to be involved in the abscisic acid (ABA) signaling pathway. Could also be able to hydrolyze PtdIns(4,5)P2 and PtdIns(3,4,5)P3. The polypeptide is Type I inositol polyphosphate 5-phosphatase 2 (Arabidopsis thaliana (Mouse-ear cress)).